A 460-amino-acid chain; its full sequence is A-type ATP synthase subunit B (460 aa).

Belongs to the ATPase alpha/beta chains family. As to quaternary structure, has multiple subunits with at least A(3), B(3), C, D, E, F, H, I and proteolipid K(x).

It is found in the cell membrane. Functionally, component of the A-type ATP synthase that produces ATP from ADP in the presence of a proton gradient across the membrane. The B chain is a regulatory subunit. The protein is A-type ATP synthase subunit B of Methanosarcina acetivorans (strain ATCC 35395 / DSM 2834 / JCM 12185 / C2A).